The sequence spans 600 residues: UvrABC system protein C (600 aa).

Residues 15–100 (NSAGVYQYFN…IKQLHPKYNI (86 aa)) form the GIY-YIG domain. Residues 203–238 (SILIKNLEKQMLVLAQNENYEEAAKVRDQIVTIKDL) form the UVR domain.

It belongs to the UvrC family. As to quaternary structure, interacts with UvrB in an incision complex.

Its subcellular location is the cytoplasm. Its function is as follows. The UvrABC repair system catalyzes the recognition and processing of DNA lesions. UvrC both incises the 5' and 3' sides of the lesion. The N-terminal half is responsible for the 3' incision and the C-terminal half is responsible for the 5' incision. The sequence is that of UvrABC system protein C from Campylobacter jejuni subsp. jejuni serotype O:23/36 (strain 81-176).